We begin with the raw amino-acid sequence, 157 residues long: Serine-protein kinase RsbW (157 aa).

Belongs to the anti-sigma-factor family.

It catalyses the reaction L-seryl-[protein] + ATP = O-phospho-L-seryl-[protein] + ADP + H(+). It carries out the reaction L-threonyl-[protein] + ATP = O-phospho-L-threonyl-[protein] + ADP + H(+). Its function is as follows. Negative regulator of sigma-B activity. Phosphorylates and inactivates its specific antagonist protein, RsbV. Upon phosphorylation of RsbV, RsbW is released and binds to sigma-B, thereby blocking its ability to form an RNA polymerase holoenzyme (E-sigma-B). The sequence is that of Serine-protein kinase RsbW from Listeria innocua serovar 6a (strain ATCC BAA-680 / CLIP 11262).